The primary structure comprises 332 residues: Anthranilate phosphoribosyltransferase (332 aa).

Residues glycine 79, 82–83 (GD), threonine 87, 89–92 (NIST), 107–115 (KHGNRSVSS), and serine 119 each bind 5-phospho-alpha-D-ribose 1-diphosphate. An anthranilate-binding site is contributed by glycine 79. Serine 91 provides a ligand contact to Mg(2+). Residue asparagine 110 coordinates anthranilate. Anthranilate is bound at residue arginine 165. The Mg(2+) site is built by aspartate 223 and glutamate 224.

It belongs to the anthranilate phosphoribosyltransferase family. Homodimer. The cofactor is Mg(2+).

It carries out the reaction N-(5-phospho-beta-D-ribosyl)anthranilate + diphosphate = 5-phospho-alpha-D-ribose 1-diphosphate + anthranilate. Its pathway is amino-acid biosynthesis; L-tryptophan biosynthesis; L-tryptophan from chorismate: step 2/5. In terms of biological role, catalyzes the transfer of the phosphoribosyl group of 5-phosphorylribose-1-pyrophosphate (PRPP) to anthranilate to yield N-(5'-phosphoribosyl)-anthranilate (PRA). The protein is Anthranilate phosphoribosyltransferase of Vibrio vulnificus (strain YJ016).